Here is a 1485-residue protein sequence, read N- to C-terminus: Chromosome partition protein MukB (1485 aa).

34-41 lines the ATP pocket; the sequence is GGNGAGKS. Coiled coils occupy residues 337–480, 509–605, 780–805, 835–915, 977–1116, and 1210–1235; these read LNLV…QAYQ, QHLA…PVWL, RAAR…ATLS, EAEI…IQQH, GMLT…AKAG, and EAIE…KLAI. The segment at 666 to 783 is flexible hinge; sequence PSGAEDARLI…EVPLFGRAAR (118 aa).

It belongs to the SMC family. MukB subfamily. Homodimerization via its hinge domain. Binds to DNA via its C-terminal region. Interacts, and probably forms a ternary complex, with MukE and MukF via its C-terminal region. The complex formation is stimulated by calcium or magnesium. Interacts with tubulin-related protein FtsZ.

It is found in the cytoplasm. Its subcellular location is the nucleoid. Its function is as follows. Plays a central role in chromosome condensation, segregation and cell cycle progression. Functions as a homodimer, which is essential for chromosome partition. Involved in negative DNA supercoiling in vivo, and by this means organize and compact chromosomes. May achieve or facilitate chromosome segregation by condensation DNA from both sides of a centrally located replisome during cell division. The polypeptide is Chromosome partition protein MukB (Yersinia pseudotuberculosis serotype O:1b (strain IP 31758)).